The sequence spans 415 residues: MATH domain and coiled-coil domain-containing protein At2g42465 (415 aa).

The MATH domain maps to 6 to 130 (RKALTLTVTN…NDRFNIEIYI (125 aa)). The stretch at 244-341 (FKLEWLKAKL…LLKDTYSDLK (98 aa)) forms a coiled coil.

The sequence is that of MATH domain and coiled-coil domain-containing protein At2g42465 from Arabidopsis thaliana (Mouse-ear cress).